The primary structure comprises 751 residues: Photosystem I P700 chlorophyll a apoprotein A1 (751 aa).

8 helical membrane-spanning segments follow: residues 73 to 96 (IFSAHFGQLGVILIWLSGMYFHGA), 159 to 182 (LYSTAIGGLLLAAAMFFAGWFHYH), 198 to 222 (MNHHLGGLLGLGSLGWAGHQIHVSL), 294 to 312 (TAHHHVAIAVLFLVAGHMY), 349 to 372 (WHAQLAINLALFGSLSIVVAHHMY), 388 to 414 (LSLFTHHMWIGGFCVVGAAAHAAIFMV), 436 to 458 (AIISHLNWVCIFLGFHSFGLYIH), and 533 to 551 (FLVHHIHAFTIHVTVLILL). [4Fe-4S] cluster is bound by residues C575 and C584. 2 consecutive transmembrane segments (helical) span residues 591 to 612 (HVFLGLFWMYNSISVVIFHFSW) and 665 to 687 (LSAYGLIFLGAHFIWAFSLMFLF). H676 is a chlorophyll a' binding site. Chlorophyll a-binding residues include M684 and Y692. W693 is a phylloquinone binding site. Residues 725–745 (AVGVAHYLLGGIATTWAFFLA) form a helical membrane-spanning segment.

Belongs to the PsaA/PsaB family. The PsaA/B heterodimer binds the P700 chlorophyll special pair and subsequent electron acceptors. PSI consists of a core antenna complex that captures photons, and an electron transfer chain that converts photonic excitation into a charge separation. The eukaryotic PSI reaction center is composed of at least 11 subunits. The cofactor is P700 is a chlorophyll a/chlorophyll a' dimer, A0 is one or more chlorophyll a, A1 is one or both phylloquinones and FX is a shared 4Fe-4S iron-sulfur center..

Its subcellular location is the plastid. The protein resides in the chloroplast thylakoid membrane. It catalyses the reaction reduced [plastocyanin] + hnu + oxidized [2Fe-2S]-[ferredoxin] = oxidized [plastocyanin] + reduced [2Fe-2S]-[ferredoxin]. Its function is as follows. PsaA and PsaB bind P700, the primary electron donor of photosystem I (PSI), as well as the electron acceptors A0, A1 and FX. PSI is a plastocyanin/cytochrome c6-ferredoxin oxidoreductase, converting photonic excitation into a charge separation, which transfers an electron from the donor P700 chlorophyll pair to the spectroscopically characterized acceptors A0, A1, FX, FA and FB in turn. Oxidized P700 is reduced on the lumenal side of the thylakoid membrane by plastocyanin or cytochrome c6. This is Photosystem I P700 chlorophyll a apoprotein A1 from Nephroselmis olivacea (Green alga).